Reading from the N-terminus, the 435-residue chain is Zinc finger CCCH domain-containing protein 67 (435 aa).

Positions 1–91 (MSKPEETSDP…DQKEEEEGSE (91 aa)) are disordered. 3 consecutive C3H1-type zinc fingers follow at residues 101-129 (RPDSEDCSFYMRTGSCKYGSSCKFNHPVR), 148-176 (NPKLMECKYYFRTGGCKYGESCRFSHMKE), and 194-222 (RPGEKECPFYMRNGSCKFGSDCKFNHPDP). Positions 235–274 (GNNGGSFSPKAPSQASSTSWSSTRHMNGTGTAPFIPSMFP) are disordered. The segment covering 247 to 256 (SQASSTSWSS) has biased composition (low complexity). C3H1-type zinc fingers lie at residues 334–362 (RPDQPECTYYLKTGDCKFKYKCKYHHPKN) and 380–408 (RPDQSMCTHYSRYGICKFGPACRFDHSIP). Residues 412–435 (SPSSSQTVEARQVGANGNEDDSWH) form a disordered region.

It is found in the nucleus. The polypeptide is Zinc finger CCCH domain-containing protein 67 (Arabidopsis thaliana (Mouse-ear cress)).